The primary structure comprises 726 residues: MDDVSKCPFSGGVKGFKNKDWWPNQLDLSVLHQHSNLSDPLGEAFDYAKEFKSLDLDALVKDLHALMTDSQEWWPADFGHYGPLFIRMAWHAAGTYRIGDGRGGAGTGQQRFAPLNSWPDNANLDKARRLLWPIKQKYGQKISWADLFVLTGNVALESMGFKTFGFGGGRADTWEPEQDIYWGPEGKWLADERYSGDRELAGSLAAVQMGLIYVNPEGPNGNPDPLAAARDIRETFARMAMNDEETVALIAGGHTFGKTHGAGDASLVGAEPEGADIAQQGLGWASKYGSGKGGDAITSGLEVIWTTTPTKWSNNFFWNLFGYEWELTKSPAGAHQWKPKHGAGANTVPDAHDPSKRHAPSMLTTDLALRFDPAYEKISRRFLENPDQFADAFARAWFKLTHRDMGPKVRYLGPLVPKEDLVWQDPVPALDHPVVDDKDVATLKSKILASGLSVGQLISTAWASASTFRGSDKRGGANGARIRLAPQKDWAVNNPAELAKVLSTLEGIQKEFNASATGGKKISIADLIVLAGNAGVEAAAKKAGVDVAVPFAPGRTDASQEQTDVESFAVLEPTHDGFRNYLSGKQWLSGEELLVDKAQLLTLTAPEMTVLVGGLRVLGANANGSKHGVFTAQTETLSNDFFVNLLDMGVAWTPVDKGEHTFEGRDRKSGAVKWTATRADLIFGSHSQLRALAEVYASSDAKQKFVKDFVAAWTKVMNLDRFDLKA.

The segment at residues 90 to 213 is a cross-link (tryptophyl-tyrosyl-methioninium (Trp-Tyr) (with M-239)); the sequence is WHAAGTYRIG…LAAVQMGLIY (124 aa). The active-site Proton acceptor is the His-91. The tryptophyl-tyrosyl-methioninium (Tyr-Met) (with W-90) cross-link spans 213–239; it reads YVNPEGPNGNPDPLAAARDIRETFARM. A heme b-binding site is contributed by His-254. The interval 334–359 is disordered; it reads AHQWKPKHGAGANTVPDAHDPSKRHA.

This sequence belongs to the peroxidase family. Peroxidase/catalase subfamily. Homodimer or homotetramer. Heme b serves as cofactor. Formation of the three residue Trp-Tyr-Met cross-link is important for the catalase, but not the peroxidase activity of the enzyme.

It catalyses the reaction H2O2 + AH2 = A + 2 H2O. The enzyme catalyses 2 H2O2 = O2 + 2 H2O. In terms of biological role, bifunctional enzyme with both catalase and broad-spectrum peroxidase activity. This Bradyrhizobium sp. (strain BTAi1 / ATCC BAA-1182) protein is Catalase-peroxidase.